We begin with the raw amino-acid sequence, 279 residues long: Vitamin B12-binding protein (279 aa).

A signal peptide spans 1-20 (MTFRFLCWLTGLLLCTAAYA). In terms of domain architecture, Fe/B12 periplasmic-binding spans 24–276 (RVISLAPHAT…QLAELKLAPS (253 aa)). Residues Cys189 and Cys265 are joined by a disulfide bond.

It belongs to the BtuF family. The complex is composed of two ATP-binding proteins (BtuD), two transmembrane proteins (BtuC) and a solute-binding protein (BtuF).

It is found in the periplasm. Functionally, part of the ABC transporter complex BtuCDF involved in vitamin B12 import. Binds vitamin B12 and delivers it to the periplasmic surface of BtuC. The protein is Vitamin B12-binding protein of Pectobacterium atrosepticum (strain SCRI 1043 / ATCC BAA-672) (Erwinia carotovora subsp. atroseptica).